We begin with the raw amino-acid sequence, 648 residues long: ATPase family AAA domain-containing protein 3B (648 aa).

Disordered stretches follow at residues 1-54 and 111-134; these read MSWL…DPTG and QAEE…QYQD. Serine 2 bears the N-acetylserine mark. At 2–246 the chain is on the mitochondrial intermembrane side; it reads SWLFGVNKGP…FRAFVTDRDK (245 aa). Pro residues predominate over residues 17 to 26; the sequence is GPPPPLPPAQ. Basic and acidic residues-rich tracts occupy residues 32–48 and 111–125; these read GGDR…DKWS and QAEE…ETRQ. Residues 69-214 adopt a coiled-coil conformation; it reads RYAKEALNLA…DIIREQIRLK (146 aa). Residues 247 to 264 constitute an intramembrane region (helical); that stretch reads VTATVAGLTLLAVGVYSA. Topologically, residues 265–648 are mitochondrial intermembrane; it reads KNATAVTGRF…PFCPPGHPLL (384 aa). Position 352 to 359 (352 to 359) interacts with ATP; the sequence is GPPGTGKT. Lysine 427 and lysine 495 each carry N6-acetyllysine.

Belongs to the AAA ATPase family. Forms heterooligomers with ATAD3A. Interacts with components of the mitochondrial ribosome, including MRPL11 and MRPS18B, and with other proteins involved in mitochondrial RNA metabolism, possibly via interaction with ATAD3A. Interacts with GADD45GIP1. As to expression, tends to be down-regulated in differentiated cells and re-expressed in pluripotent stem cells or cancer cells (at protein level).

The protein resides in the mitochondrion inner membrane. May play a role in a mitochondrial network organization typical for stem cells, characterized by reduced mitochondrial metabolism, low mtDNA copies and fragmentated mitochondrial network. May act by suppressing ATAD3A function, interfering with ATAD3A interaction with matrix nucleoid complexes. The protein is ATPase family AAA domain-containing protein 3B (ATAD3B) of Homo sapiens (Human).